The chain runs to 308 residues: Ferredoxin--NADP reductase (308 aa).

FAD-binding residues include glutamate 26, glutamine 34, tyrosine 39, valine 77, phenylalanine 106, aspartate 266, and threonine 306.

The protein belongs to the ferredoxin--NADP reductase type 2 family. In terms of assembly, homodimer. FAD serves as cofactor.

The catalysed reaction is 2 reduced [2Fe-2S]-[ferredoxin] + NADP(+) + H(+) = 2 oxidized [2Fe-2S]-[ferredoxin] + NADPH. The protein is Ferredoxin--NADP reductase of Lactobacillus delbrueckii subsp. bulgaricus (strain ATCC 11842 / DSM 20081 / BCRC 10696 / JCM 1002 / NBRC 13953 / NCIMB 11778 / NCTC 12712 / WDCM 00102 / Lb 14).